A 258-amino-acid chain; its full sequence is Immediate-early protein IE-0 (258 aa).

The RING-type zinc-finger motif lies at C191–K237.

The protein is Immediate-early protein IE-0 (IE-0) of Lymantria dispar multicapsid nuclear polyhedrosis virus (LdMNPV).